A 117-amino-acid chain; its full sequence is Hemerythrin subunit alpha (117 aa).

7 residues coordinate Fe cation: H24, H53, E57, H72, H76, H105, and D110.

The protein belongs to the hemerythrin family. As to quaternary structure, octamer composed of two types of chains: alpha and beta.

Its function is as follows. Hemerythrin is a respiratory protein in blood cells of certain marine worms. The oxygen-binding site in each chain contains two iron atoms. This is Hemerythrin subunit alpha from Lingula reevii (Inarticulated brachiopod).